The sequence spans 538 residues: Putative cysteine ligase BshC (538 aa).

A coiled-coil region spans residues 460 to 484 (KINEQIELLERMLKRNVEKKHEVEL).

It belongs to the BshC family.

Functionally, involved in bacillithiol (BSH) biosynthesis. May catalyze the last step of the pathway, the addition of cysteine to glucosamine malate (GlcN-Mal) to generate BSH. The polypeptide is Putative cysteine ligase BshC (Bacillus thuringiensis subsp. konkukian (strain 97-27)).